An 84-amino-acid chain; its full sequence is RNA-binding protein Hfq (84 aa).

Residues 11 to 71 (DTFLNFVRKN…ISTIMPGAPI (61 aa)) form the Sm domain.

It belongs to the Hfq family. Homohexamer.

RNA chaperone that binds small regulatory RNA (sRNAs) and mRNAs to facilitate mRNA translational regulation in response to envelope stress, environmental stress and changes in metabolite concentrations. Also binds with high specificity to tRNAs. This chain is RNA-binding protein Hfq, found in Beijerinckia indica subsp. indica (strain ATCC 9039 / DSM 1715 / NCIMB 8712).